The sequence spans 512 residues: Beta-glucosidase 44 (512 aa).

Positions M1–G23 are cleaved as a signal peptide. Residue Q58 participates in a beta-D-glucoside binding. An N-linked (GlcNAc...) asparagine glycan is attached at N86. Residues H159 and N204 to E205 contribute to the a beta-D-glucoside site. E205 serves as the catalytic Proton donor. C224 and C231 form a disulfide bridge. A glycan (N-linked (GlcNAc...) asparagine) is linked at N230. A beta-D-glucoside-binding residues include Y347 and E419. E419 (nucleophile) is an active-site residue. N427 carries an N-linked (GlcNAc...) asparagine glycan. Residues W466, E473–W474, and F482 contribute to the a beta-D-glucoside site.

It belongs to the glycosyl hydrolase 1 family. As to quaternary structure, homodimer.

It localises to the secreted. It catalyses the reaction Hydrolysis of terminal, non-reducing beta-D-glucosyl residues with release of beta-D-glucose.. Hydrolyzes p-nitrophenyl beta-D-glucoside, p-nitrophenyl beta-D-mannoside, cellobiose, 4-methylumbelliferyl-beta-D-glucoside, laminarin, amygdalin, esculin and gentiobiose. This Arabidopsis thaliana (Mouse-ear cress) protein is Beta-glucosidase 44.